The sequence spans 877 residues: DNA polymerase I (877 aa).

Residues 177–270 form the 5'-3' exonuclease domain; the sequence is TPAQFIDLKA…LEDLVYSGPD (94 aa). In terms of domain architecture, 3'-5' exonuclease spans 302-465; the sequence is DFTIVDQISQ…TEPILLEKLS (164 aa).

This sequence belongs to the DNA polymerase type-A family. Single-chain monomer with multiple functions.

The catalysed reaction is DNA(n) + a 2'-deoxyribonucleoside 5'-triphosphate = DNA(n+1) + diphosphate. In addition to polymerase activity, this DNA polymerase exhibits 3'-5' and 5'-3' exonuclease activity. The sequence is that of DNA polymerase I (polA) from Streptococcus pneumoniae (strain ATCC BAA-255 / R6).